Here is a 335-residue protein sequence, read N- to C-terminus: Transcriptional adapter 1 (335 aa).

The disordered stretch occupies residues 83-103; that stretch reads LPWPGGSAAKPGKPKGKKKLS. A compositionally biased stretch (low complexity) spans 84–93; that stretch reads PWPGGSAAKP. Over residues 94–103 the composition is skewed to basic residues; sequence GKPKGKKKLS.

This sequence belongs to the TADA1 family. Component of the STAGA transcription coactivator-HAT complex, at least composed of SUPT3H, GCN5L2, TAF5L, TAF6L, SUPT7L, TADA3L, TAD1L, TAF10, TAF12, TRRAP and TAF9.

Its subcellular location is the nucleus. Functionally, probably involved in transcriptional regulation. In Homo sapiens (Human), this protein is Transcriptional adapter 1 (TADA1).